We begin with the raw amino-acid sequence, 453 residues long: GTPase Der (453 aa).

EngA-type G domains follow at residues 3–178 (PKIA…PNNE) and 190–363 (LKLA…LECS). GTP contacts are provided by residues 9 to 16 (GRPNVGKS), 57 to 61 (DTGGV), 130 to 133 (NKVD), 196 to 203 (GRPNAGKS), 243 to 247 (DTAGI), and 308 to 311 (NKTD). Residues 364–448 (TRINTGVLNR…PIRIRLRSSH (85 aa)) form the KH-like domain.

Belongs to the TRAFAC class TrmE-Era-EngA-EngB-Septin-like GTPase superfamily. EngA (Der) GTPase family. Associates with the 50S ribosomal subunit.

In terms of biological role, GTPase that plays an essential role in the late steps of ribosome biogenesis. The polypeptide is GTPase Der (Lawsonia intracellularis (strain PHE/MN1-00)).